A 451-amino-acid chain; its full sequence is tRNA-2-methylthio-N(6)-dimethylallyladenosine synthase (451 aa).

The region spanning 3-120 (LKLHIKTYGC…LPEMINHVRI (118 aa)) is the MTTase N-terminal domain. [4Fe-4S] cluster contacts are provided by C12, C49, C83, C157, C161, and C164. Residues 143–375 (QAKGPTAFVS…QECIRKQAMK (233 aa)) enclose the Radical SAM core domain. One can recognise a TRAM domain in the interval 378–441 (QAMKGTVQCI…SNSLRGELIS (64 aa)).

This sequence belongs to the methylthiotransferase family. MiaB subfamily. As to quaternary structure, monomer. [4Fe-4S] cluster is required as a cofactor.

The protein localises to the cytoplasm. It catalyses the reaction N(6)-dimethylallyladenosine(37) in tRNA + (sulfur carrier)-SH + AH2 + 2 S-adenosyl-L-methionine = 2-methylsulfanyl-N(6)-dimethylallyladenosine(37) in tRNA + (sulfur carrier)-H + 5'-deoxyadenosine + L-methionine + A + S-adenosyl-L-homocysteine + 2 H(+). In terms of biological role, catalyzes the methylthiolation of N6-(dimethylallyl)adenosine (i(6)A), leading to the formation of 2-methylthio-N6-(dimethylallyl)adenosine (ms(2)i(6)A) at position 37 in tRNAs that read codons beginning with uridine. The protein is tRNA-2-methylthio-N(6)-dimethylallyladenosine synthase of Baumannia cicadellinicola subsp. Homalodisca coagulata.